Consider the following 95-residue polypeptide: Aspartyl/glutamyl-tRNA(Asn/Gln) amidotransferase subunit C (95 aa).

It belongs to the GatC family. In terms of assembly, heterotrimer of A, B and C subunits.

It carries out the reaction L-glutamyl-tRNA(Gln) + L-glutamine + ATP + H2O = L-glutaminyl-tRNA(Gln) + L-glutamate + ADP + phosphate + H(+). It catalyses the reaction L-aspartyl-tRNA(Asn) + L-glutamine + ATP + H2O = L-asparaginyl-tRNA(Asn) + L-glutamate + ADP + phosphate + 2 H(+). In terms of biological role, allows the formation of correctly charged Asn-tRNA(Asn) or Gln-tRNA(Gln) through the transamidation of misacylated Asp-tRNA(Asn) or Glu-tRNA(Gln) in organisms which lack either or both of asparaginyl-tRNA or glutaminyl-tRNA synthetases. The reaction takes place in the presence of glutamine and ATP through an activated phospho-Asp-tRNA(Asn) or phospho-Glu-tRNA(Gln). The polypeptide is Aspartyl/glutamyl-tRNA(Asn/Gln) amidotransferase subunit C (Hydrogenovibrio crunogenus (strain DSM 25203 / XCL-2) (Thiomicrospira crunogena)).